We begin with the raw amino-acid sequence, 154 residues long: Ribonuclease H (154 aa).

Residues 1–142 (MTPKLVIYTD…ADELARLGML (142 aa)) form the RNase H type-1 domain. Mg(2+) contacts are provided by aspartate 10, glutamate 48, aspartate 70, and aspartate 134.

The protein belongs to the RNase H family. In terms of assembly, monomer. The cofactor is Mg(2+).

The protein resides in the cytoplasm. It catalyses the reaction Endonucleolytic cleavage to 5'-phosphomonoester.. Endonuclease that specifically degrades the RNA of RNA-DNA hybrids. This chain is Ribonuclease H, found in Caulobacter sp. (strain K31).